We begin with the raw amino-acid sequence, 535 residues long: Growth-regulating factor 2 (535 aa).

The QLQ domain occupies 164–199; that stretch reads PFTLTQWAELEQQALIYKYITANVPVPSSLLISIKK. Residues 227–271 enclose the WRC domain; that stretch reads DPEPGRCRRTDGKKWRCSRDAVPDQKYCERHINRGRHRSRKPVEV. Short sequence motifs (bipartite nuclear localization signal) lie at residues 232–242 and 260–267; these read RCRRTDGKKWR and RGRHRSRK. 3 disordered regions span residues 260-308, 417-437, and 514-535; these read RGRH…ASSN, PIASSSPSSTHNNNNAQEKTT, and SSVSSPIAENNRHNGDYFHYTT. Residues 272–291 show a composition bias toward polar residues; sequence QSGQNQTAAAASKAVTTPQQ. The segment covering 299-308 has biased composition (low complexity); sequence NRSNARASSN. Polar residues predominate over residues 426-437; sequence THNNNNAQEKTT.

It belongs to the GRF family. Interacts with GIF1. Strongly expressed in actively growing and developing tissues, such as roots, upper stems, and shoot tips containing the shoot apical meristem (SAM) and flower buds. Detected in young leaf primordium. Also expressed in mature flowers, but weakly expressed in mature stems and leaves.

Its subcellular location is the nucleus. Its function is as follows. Transcription activator that plays a role in the regulation of cell expansion in leaf and cotyledons tissues. Component of a network formed by miR396, the GRFs and their interacting factors (GIFs) acting in the regulation of meristem function, at least partially through the control of cell proliferation. The chain is Growth-regulating factor 2 (GRF2) from Arabidopsis thaliana (Mouse-ear cress).